The chain runs to 646 residues: Leukotriene A-4 hydrolase homolog (646 aa).

A peptide contacts are provided by residues 172 to 174 (QCQ) and 307 to 312 (PYGGME). H336 contacts Zn(2+). Catalysis depends on E337, which acts as the Proton acceptor. Residues H340 and E359 each contribute to the Zn(2+) site. Residue Y424 is the Proton donor of the active site.

The protein belongs to the peptidase M1 family. Zn(2+) serves as cofactor.

It localises to the cytoplasm. The protein resides in the nucleus. The enzyme catalyses leukotriene A4 + H2O = leukotriene B4. It functions in the pathway lipid metabolism; leukotriene B4 biosynthesis. Its function is as follows. Aminopeptidase that preferentially cleaves tripeptides. Also has low epoxide hydrolase activity (in vitro). Can hydrolyze an epoxide moiety of LTA(4) to form LTB(4) (in vitro). The sequence is that of Leukotriene A-4 hydrolase homolog from Botryotinia fuckeliana (strain B05.10) (Noble rot fungus).